Consider the following 297-residue polypeptide: Carbamate kinase (297 aa).

It belongs to the carbamate kinase family.

The protein resides in the cytoplasm. It carries out the reaction hydrogencarbonate + NH4(+) + ATP = carbamoyl phosphate + ADP + H2O + H(+). The catalysed reaction is carbamate + ATP = carbamoyl phosphate + ADP. It catalyses the reaction hydrogencarbonate + NH4(+) = carbamate + H2O + H(+). Its pathway is nitrogen metabolism; (S)-allantoin degradation. Its function is as follows. Kinase involved in the anaerobic nitrogen utilization via the assimilation of allantoin. Catalyzes the transfer of a phosphate group from carbamoyl phosphate to ADP to produce ATP and leave carbamate, which spontaneously hydrolyzes to ammonia and hydrogencarbonate. The polypeptide is Carbamate kinase (Escherichia coli (strain K12)).